The sequence spans 260 residues: Na(+)-translocating NADH-quinone reductase subunit C (260 aa).

The helical transmembrane segment at 12–32 (LLVIILLSLACSIIVAGSAVL) threads the bilayer. Threonine 226 bears the FMN phosphoryl threonine mark.

It belongs to the NqrC family. As to quaternary structure, composed of six subunits; NqrA, NqrB, NqrC, NqrD, NqrE and NqrF. FMN serves as cofactor.

The protein resides in the cell inner membrane. It catalyses the reaction a ubiquinone + n Na(+)(in) + NADH + H(+) = a ubiquinol + n Na(+)(out) + NAD(+). Its function is as follows. NQR complex catalyzes the reduction of ubiquinone-1 to ubiquinol by two successive reactions, coupled with the transport of Na(+) ions from the cytoplasm to the periplasm. NqrA to NqrE are probably involved in the second step, the conversion of ubisemiquinone to ubiquinol. The polypeptide is Na(+)-translocating NADH-quinone reductase subunit C (Pasteurella multocida (strain Pm70)).